The sequence spans 247 residues: MEIPYITPAKLLSTNVLPLNGVKTAFVCFCPMPSVFSKYRLNVEVNTRLFLHVHNMHIMFGQYGATKFIVITEVYGGPVGVTIVEELKHYGIDKIIGIGFVGSFDPAIKTGSIVDAEKSLIEHGTTPHYLSADTKYTFPTLKIELPQLNVNKVCIWTTNALYREFKSDIIEAKNKQCSVVNMDTSHLYAACELLNVSCRYFAVVSDMLDLDGAENWSNDLTDAINHNDSDISVSMSSLIDHIIRQLN.

This is an uncharacterized protein from Acanthamoeba polyphaga (Amoeba).